A 152-amino-acid chain; its full sequence is UPF0178 protein YPTS_2857 (152 aa).

Belongs to the UPF0178 family.

In Yersinia pseudotuberculosis serotype IB (strain PB1/+), this protein is UPF0178 protein YPTS_2857.